The sequence spans 496 residues: Probable malate:quinone oxidoreductase (496 aa).

This sequence belongs to the MQO family. Requires FAD as cofactor.

The catalysed reaction is (S)-malate + a quinone = a quinol + oxaloacetate. Its pathway is carbohydrate metabolism; tricarboxylic acid cycle; oxaloacetate from (S)-malate (quinone route): step 1/1. This is Probable malate:quinone oxidoreductase from Prochlorococcus marinus (strain MIT 9313).